We begin with the raw amino-acid sequence, 424 residues long: Enolase (424 aa).

Q162 contributes to the (2R)-2-phosphoglycerate binding site. E204 functions as the Proton donor in the catalytic mechanism. Mg(2+) is bound by residues D241, E284, and D311. (2R)-2-phosphoglycerate contacts are provided by K336, R365, S366, and K387. K336 serves as the catalytic Proton acceptor.

The protein belongs to the enolase family. Requires Mg(2+) as cofactor.

The protein resides in the cytoplasm. The protein localises to the secreted. Its subcellular location is the cell surface. It catalyses the reaction (2R)-2-phosphoglycerate = phosphoenolpyruvate + H2O. The protein operates within carbohydrate degradation; glycolysis; pyruvate from D-glyceraldehyde 3-phosphate: step 4/5. Catalyzes the reversible conversion of 2-phosphoglycerate (2-PG) into phosphoenolpyruvate (PEP). It is essential for the degradation of carbohydrates via glycolysis. This is Enolase from Parvibaculum lavamentivorans (strain DS-1 / DSM 13023 / NCIMB 13966).